Here is a 21-residue protein sequence, read N- to C-terminus: MCLGVPIKLSKLMKILFNLPQ.

This is an uncharacterized protein from Haemophilus influenzae (strain ATCC 51907 / DSM 11121 / KW20 / Rd).